The chain runs to 522 residues: Maturase K (522 aa).

It belongs to the intron maturase 2 family. MatK subfamily.

The protein localises to the plastid. It is found in the chloroplast. Functionally, usually encoded in the trnK tRNA gene intron. Probably assists in splicing its own and other chloroplast group II introns. This is Maturase K from Tigridia pavonia (Mexican shell flower).